The sequence spans 81 residues: uncharacterized protein (81 aa).

This is an uncharacterized protein from Carnobacterium maltaromaticum (Carnobacterium piscicola).